Reading from the N-terminus, the 254-residue chain is Small ribosomal subunit protein uS3 (254 aa).

The 69-residue stretch at 38-106 (IRKYVLARIP…DVQINIFEIK (69 aa)) folds into the KH type-2 domain. Low complexity predominate over residues 215-238 (NVGNAASGASSSSNNDNASPNQGG). The disordered stretch occupies residues 215-254 (NVGNAASGASSSSNNDNASPNQGGPRRKRGGEGNRKKSNK). Positions 244–254 (GGEGNRKKSNK) are enriched in basic and acidic residues.

It belongs to the universal ribosomal protein uS3 family. As to quaternary structure, part of the 30S ribosomal subunit. Forms a tight complex with proteins S10 and S14.

Binds the lower part of the 30S subunit head. Binds mRNA in the 70S ribosome, positioning it for translation. The sequence is that of Small ribosomal subunit protein uS3 from Cytophaga hutchinsonii (strain ATCC 33406 / DSM 1761 / CIP 103989 / NBRC 15051 / NCIMB 9469 / D465).